A 367-amino-acid chain; its full sequence is Alanine racemase (367 aa).

Lysine 40 serves as the catalytic Proton acceptor; specific for D-alanine. Lysine 40 is subject to N6-(pyridoxal phosphate)lysine. Arginine 136 provides a ligand contact to substrate. The active-site Proton acceptor; specific for L-alanine is the tyrosine 263. Methionine 310 serves as a coordination point for substrate.

Belongs to the alanine racemase family. Requires pyridoxal 5'-phosphate as cofactor.

The enzyme catalyses L-alanine = D-alanine. The protein operates within amino-acid biosynthesis; D-alanine biosynthesis; D-alanine from L-alanine: step 1/1. Catalyzes the interconversion of L-alanine and D-alanine. May also act on other amino acids. This is Alanine racemase (alr) from Lactococcus lactis subsp. cremoris (strain MG1363).